A 254-amino-acid chain; its full sequence is MSFTVIIPARFASSRLPGKPLADIAGKPMIQHVFEKALQSGANRVIIATDNENVADVAKNFGAEVCMTSVNHNSGTERLAEVVEKLAIPDNEIIVNIQGDEPLIPPVIVRQVADNLAKFNVNMASLAVKIHDAEELFNPNAVKVLTDKDGYVLYFSRSVIPYDRDQFMNLQDVQKVQLADAYLRHIGIYAYRAGFIKQYVQWAPTQLENLEKLEQLRVLYNGERIHVELAKEVPAVGVDTAEDLEKVRAILAAN.

The protein belongs to the KdsB family.

It localises to the cytoplasm. It carries out the reaction 3-deoxy-alpha-D-manno-oct-2-ulosonate + CTP = CMP-3-deoxy-beta-D-manno-octulosonate + diphosphate. Its pathway is nucleotide-sugar biosynthesis; CMP-3-deoxy-D-manno-octulosonate biosynthesis; CMP-3-deoxy-D-manno-octulosonate from 3-deoxy-D-manno-octulosonate and CTP: step 1/1. It functions in the pathway bacterial outer membrane biogenesis; lipopolysaccharide biosynthesis. Functionally, activates KDO (a required 8-carbon sugar) for incorporation into bacterial lipopolysaccharide in Gram-negative bacteria. The chain is 3-deoxy-manno-octulosonate cytidylyltransferase from Haemophilus influenzae (strain 86-028NP).